A 38-amino-acid polypeptide reads, in one-letter code: MKVRASVKKLCRNCKIIRRDGVVRVICSTEPRHKQRQG.

This sequence belongs to the bacterial ribosomal protein bL36 family.

The chain is Large ribosomal subunit protein bL36 from Azotobacter vinelandii (strain DJ / ATCC BAA-1303).